The chain runs to 360 residues: sn-glycerol-3-phosphate import ATP-binding protein UgpC (360 aa).

The region spanning 4 to 235 (LSLKGVRKSY…PATTFVASFI (232 aa)) is the ABC transporter domain. ATP is bound at residue 37-44 (GPSGCGKS).

Belongs to the ABC transporter superfamily. sn-glycerol-3-phosphate importer (TC 3.A.1.1.3) family. The complex is composed of two ATP-binding proteins (UgpC), two transmembrane proteins (UgpA and UgpE) and a solute-binding protein (UgpB).

Its subcellular location is the cell inner membrane. The catalysed reaction is sn-glycerol 3-phosphate(out) + ATP + H2O = sn-glycerol 3-phosphate(in) + ADP + phosphate + H(+). Part of the ABC transporter complex UgpBAEC involved in sn-glycerol-3-phosphate (G3P) import. Responsible for energy coupling to the transport system. This chain is sn-glycerol-3-phosphate import ATP-binding protein UgpC, found in Burkholderia pseudomallei (strain K96243).